A 1018-amino-acid chain; its full sequence is Cytadherence high molecular weight protein 1 (1018 aa).

Coiled-coil stretches lie at residues 782 to 815 and 849 to 880; these read NRFL…AKDL and ELVR…AVYK.

In terms of processing, phosphorylated mainly on serine residues.

Its subcellular location is the cell projection. The protein resides in the attachment organelle membrane. In terms of biological role, component of the cytoskeleton-like structure which stabilizes the shape of the wall-less Mycoplasma. This cytoskeleton-like network of accessory proteins containing HMW proteins 1 to 5 allows the proper anchoring of cytadhesin proteins in the mycoplasmal membrane at the attachment organelle. The protein is Cytadherence high molecular weight protein 1 (hmw1) of Mycoplasma pneumoniae (strain ATCC 29342 / M129 / Subtype 1) (Mycoplasmoides pneumoniae).